We begin with the raw amino-acid sequence, 88 residues long: MKKSLFAAALLSLALAACGGEKAAEAPAAEASSTEAPAAEAPAAEAPAAEAAAAEAPAAEAPAAEAPAAEAAATEAPAAEAPAAEAAK.

Residues 1–17 (MKKSLFAAALLSLALAA) form the signal peptide. The N-palmitoyl cysteine moiety is linked to residue cysteine 18. A lipid anchor (S-diacylglycerol cysteine) is attached at cysteine 18. 13 repeat units span residues 23-27 (AAEAP), 28-32 (AAEAS), 33-37 (STEAP), 38-42 (AAEAP), 43-47 (AAEAP), 48-52 (AAEAA), 53-57 (AAEAP), 58-62 (AAEAP), 63-67 (AAEAP), 68-72 (AAEAA), 73-77 (ATEAP), 78-82 (AAEAP), and 83-87 (AAEAA). The 13 X 5 AA tandem repeats of [AS]-[AT]-E-A-[PAS] stretch occupies residues 23–87 (AAEAPAAEAS…AAEAPAAEAA (65 aa)). Residues 23–88 (AAEAPAAEAS…AEAPAAEAAK (66 aa)) form a disordered region. Residues 25 to 88 (EAPAAEASST…AEAPAAEAAK (64 aa)) are compositionally biased toward low complexity.

Its subcellular location is the cell outer membrane. The chain is Outer membrane protein H.8 from Neisseria gonorrhoeae (strain ATCC 700825 / FA 1090).